The following is a 292-amino-acid chain: AKT-interacting protein homolog B (292 aa).

Residues 1–44 (MNPFWNMPSASVRKRSDNDEKIATADQKISPARSSSAKKQLPSI) form a disordered region. The segment covering 14–23 (KRSDNDEKIA) has biased composition (basic and acidic residues). The 149-residue stretch at 75–223 (YLEYSLLAEF…VVDSVKLCNS (149 aa)) folds into the UBC core domain.

This sequence belongs to the ubiquitin-conjugating enzyme family. FTS subfamily.

It localises to the cytoplasm. The protein localises to the cell membrane. May function to promote vesicle trafficking and/or fusion. May also regulate apoptosis. The protein is AKT-interacting protein homolog B (aktip-b) of Xenopus laevis (African clawed frog).